Here is a 99-residue protein sequence, read N- to C-terminus: Class II hydrophobin B (99 aa).

The N-terminal stretch at 1 to 15 (MKFFAIAALFAGALA) is a signal peptide. Cystine bridges form between cysteine 30/cysteine 79 and cysteine 40/cysteine 70.

The protein belongs to the cerato-ulmin hydrophobin family.

It is found in the secreted. It localises to the cell wall. The protein localises to the vacuole. Its subcellular location is the cytoplasmic vesicle. In terms of biological role, aerial growth, conidiation, and dispersal of filamentous fungi in the environment rely upon a capability of their secreting small amphipathic proteins called hydrophobins (HPBs) with low sequence identity. Class I can self-assemble into an outermost layer of rodlet bundles on aerial cell surfaces, conferring cellular hydrophobicity that supports fungal growth, development and dispersal; whereas Class II form highly ordered films at water-air interfaces through intermolecular interactions but contribute nothing to the rodlet structure. Hyd2B contributes to certain cell wall-related features, such as hydrophobicity but is not involved in cell wall-related events during fungal proliferation in host hemocoel. Does not contribute to conidial hydrophobicity. Involved in insect hemocoel colonization independent of cell hydrophobicity. In Beauveria bassiana (strain ARSEF 2860) (White muscardine disease fungus), this protein is Class II hydrophobin B.